The sequence spans 423 residues: ATP-dependent Clp protease ATP-binding subunit ClpX (423 aa).

One can recognise a ClpX-type ZB domain in the interval 1–50 (MTDDTEYRCSFCGKEHHQVDDLIAGPDVRICSECVVLSCEIVEDRRNEAL). 4 residues coordinate Zn(2+): cysteine 9, cysteine 12, cysteine 31, and cysteine 34. ATP is bound at residue 126–133 (PTGCGKTY).

The protein belongs to the ClpX chaperone family. As to quaternary structure, component of the ClpX-ClpP complex. Forms a hexameric ring that, in the presence of ATP, binds to fourteen ClpP subunits assembled into a disk-like structure with a central cavity, resembling the structure of eukaryotic proteasomes.

Functionally, ATP-dependent specificity component of the Clp protease. It directs the protease to specific substrates. Can perform chaperone functions in the absence of ClpP. In Tropheryma whipplei (strain Twist) (Whipple's bacillus), this protein is ATP-dependent Clp protease ATP-binding subunit ClpX.